The chain runs to 223 residues: uncharacterized protein (223 aa).

The Tyr recombinase domain occupies 29–220 (KQTYKMFKED…AKEILKNIGD (192 aa)). Active-site residues include arginine 71, lysine 103, histidine 170, arginine 173, and histidine 196. Tyrosine 205 acts as the O-(3'-phospho-DNA)-tyrosine intermediate in catalysis.

It belongs to the 'phage' integrase family.

This is an uncharacterized protein from Methanocaldococcus jannaschii (strain ATCC 43067 / DSM 2661 / JAL-1 / JCM 10045 / NBRC 100440) (Methanococcus jannaschii).